Consider the following 373-residue polypeptide: Probable leucine aminopeptidase 1 (373 aa).

The signal sequence occupies residues 1–18; it reads MKLLSVLALSATATSVLG. Residues His176 and Asp195 each contribute to the Zn(2+) site. The N-linked (GlcNAc...) asparagine glycan is linked to Asn196. Glu234 and Asp261 together coordinate Zn(2+). An N-linked (GlcNAc...) asparagine glycan is attached at Asn288. Cys310 and Cys314 are joined by a disulfide. Zn(2+) is bound at residue His343.

Belongs to the peptidase M28 family. M28E subfamily. In terms of assembly, monomer. Requires Zn(2+) as cofactor.

It localises to the secreted. In terms of biological role, extracellular aminopeptidase which contributes to pathogenicity. The protein is Probable leucine aminopeptidase 1 (LAP1) of Trichophyton verrucosum (strain HKI 0517).